Reading from the N-terminus, the 57-residue chain is High light-inducible protein HliD (57 aa).

The Chlorophyll-binding motif motif lies at Glu-25–Arg-30. A helical membrane pass occupies residues Glu-25–Thr-46.

It belongs to the Hlip family. As to quaternary structure, probably forms dimers which bind 6 chlorophyll a and 2 beta-carotenoid molecules. Cofractionates in an approximately 50 kDa fraction of the thylakoid membrane with HliC. Does not associate with mature PSII. Purified in several chlorophyll- and carotenoid-containing complexes, including photosystem II (PSII) assembly intermediate complex RCII* (iD1, D1, D2, PsbE, PsbF, PsbI, Ycf39, Ycf48, HliC and HliD) and the Ycf39-Hlip complex (Ycf39, HliC, HliD and pigments).

It is found in the cellular thylakoid membrane. Involved in photosystem II (PSII) assembly and/or repair under high light stress. Required for binding of chlorophyll and carotenoids by the Ycf39-Hlip complex. The Ycf39-Hlip complex binds D1 at an early stage of PSII assembly along with Ycf48, ribosomes and ChlG, the last enzyme in chlorophyll biosynthesis; it may be involved in chlorophyll reuse and delivery to D1 in the initial stages of PSII assembly. Binds chlorophyll a and beta-carotenoid in a 3:1 stoichiometry in the presence and absence of Yfc39; in the Ycf39-HliC-HliD complex, HliD binds all the pigment. The Ycf39-Hlip complex efficiently quenches chlorophyll fluorescence, contributing to photoprotection. Deletion of 4 to 5 members of the Hlip family suggests the proteins are involved in regulation of chlorophyll biosynthesis, in stabilization of chlorophyll-binding proteins and/or in reuse of chlorophylls, and may regulate tetrapyrrole biosynthesis. Might bind chlorophyll and/or carotenoids in association with HliC (called the ScpBE pair). Functionally, the Hlips might regulate tetrapyrrole biosynthesis, maybe at the level of aminolevulinic acid synthesis and probably stabilize PSII assembly intermediates. This Synechocystis sp. (strain ATCC 27184 / PCC 6803 / Kazusa) protein is High light-inducible protein HliD (hliD).